Here is a 1363-residue protein sequence, read N- to C-terminus: MFLILLISLPTAFAVIGDLKCTTVSINDVDTGVPSISTDTVDVTNGLGTYYVLDRVYLNTTLLLNGYYPTSGSTYRNMALKGTLLLSTLWFKPPFLSDFTNGIFAKVKNTKVIKDGVKYSEFPAITIGSTFVNTSYSVVVQPHTTNLDNKLQGLLEISVCQYTMCEYPNTICNPNLGNQRVELWHWDTGVVSCLYKRNFTYDVNADYLYFHFYQEGGTFYAYFTDTGVVTKFLFNVYLGTVLSHYYVMPLTCNSAMTLEYWVTPLTSKQYLLAFNQDGVIFNAVDCKSDFMSEIKCKTLSIAPSTGVYELNGYTVQPIADVYRRIPNLPDCNIEAWLNDKSVPSPLNWERKTFSNCNFNMSSLMSFIQADSFTCNNIDAAKIYGMCFSSITIDKFAIPNGRKVDLQLGNLGYLQSFNYRIDTTATSCQLYYNLPAANVSVSRFNPSIWNRRFGFTEQSVFKPQPAGVFTDHDVVYAQHCFKAPTNFCPCKLDGSLCVGSGSGIDAGYKNTGIGTCPAGTNYLTCHNAAQCGCLCTPDPITSKATGPYKCPQTKYLVGIGEHCSGLAIKSDYCGGNPCSCRPQAFLGWSVDSCLQGDRCNIFANFILHDVNSGTTCSTDLQKSNTDIILGVCVNYDLYGITGQGIFVEVNATYYNSWQNLLYDSNGNLYGFRDYLTNRTFMIRSCYSGRVSAAFHANSSEPALLFRNIKCNYVFNNTLSRQLQPINYFDSYLGCVVNADNSTSSVVQTCDLTVGSGYCVDYSTKRRSRRSITTGYRFTNFEPFTVNSVNDSLEPVGGLYEIQIPSEFTIGNMEEFIQTSSPKVTIDCSAFVCGDYAACKSQLVEYGSFCDNINAILTEVNELLDTTQLQVANSLMNGVTLSTKLKDGVNFNVDDINFSPVLGCLGSDCNKVSSRSAIEDLLFSKVKLSDVGFVEAYNNCTGGAEIRDLICVQSYNGIKVLPPLLSENQISGYTLAATSASLFPPWSAAAGVPFYLNVQYRINGIGVTMDVLSQNQKLIANAFNNALGAIQEGFDATNSALVKIQAVVNANAEALNNLLQQLSNRFGAISSSLQEILSRLDALEAQAQIDRLINGRLTALNAYVSQQLSDSTLVKFSAAQAMEKVNECVKSQSSRINFCGNGNHIISLVQNAPYGLYFIHFSYVPTKYVTAKVSPGLCIAGDRGIAPKSGYFVNVNNTWMFTGSGYYYPEPITGNNVVVMSTCAVNYTKAPDVMLNISTPNLPDFKEELDQWFKNQTSVAPDLSLDYINVTFLDLQDEMNRLQEAIKVLNQSYINLKDIGTYEYYVKWPWYVWLLIGFAGVAMLVLLFFICCCTGCGTSCFKKCGGCCDDYTGHQELVIKTSHDD.

The N-terminal stretch at 1–13 is a signal peptide; that stretch reads MFLILLISLPTAF. The Extracellular portion of the chain corresponds to 14-1307; that stretch reads AVIGDLKCTT…GTYEYYVKWP (1294 aa). In terms of domain architecture, BetaCoV S1-NTD spans 15-298; that stretch reads VIGDLKCTTV…DFMSEIKCKT (284 aa). Intrachain disulfides connect C21–C165, C160–C193, C172–C252, C286–C296, and C331–C356. N-linked (GlcNAc...) asparagine; by host glycosylation is found at N59 and N133. N-linked (GlcNAc...) asparagine; by host glycosylation is present at N198. The region spanning 329–617 is the BetaCoV S1-CTD domain; that stretch reads PDCNIEAWLN…DVNSGTTCST (289 aa). N359 carries N-linked (GlcNAc...) asparagine; by host glycosylation. Cystine bridges form between C374/C427 and C386/C615. Residues N437, N649, N676, N696, N714, N739, and N788 are each glycosylated (N-linked (GlcNAc...) asparagine; by host). Fusion peptide regions lie at residues 914–935 and 933–953; these read SAIE…VEAY and EAYN…VQSY. N937 carries N-linked (GlcNAc...) asparagine; by host glycosylation. C938 and C949 are disulfide-bonded. The tract at residues 1014-1064 is heptad repeat 1; that stretch reads QKLIANAFNNALGAIQEGFDATNSALVKIQAVVNANAEALNNLLQQLSNRF. Residues 1043 to 1087 are a coiled coil; it reads QAVVNANAEALNNLLQQLSNRFGAISSSLQEILSRLDALEAQAQI. Residues N1194, N1224, N1234, N1253, N1267, and N1288 are each glycosylated (N-linked (GlcNAc...) asparagine; by host). The tract at residues 1258 to 1296 is heptad repeat 2; sequence APDLSLDYINVTFLDLQDEMNRLQEAIKVLNQSYINLKD. Residues 1269–1297 are a coiled coil; it reads TFLDLQDEMNRLQEAIKVLNQSYINLKDI. Residues 1308–1328 traverse the membrane as a helical segment; the sequence is WYVWLLIGFAGVAMLVLLFFI. The Cytoplasmic segment spans residues 1329 to 1363; it reads CCCTGCGTSCFKKCGGCCDDYTGHQELVIKTSHDD. The short motif at 1359–1363 is the KxHxx element; that stretch reads TSHDD.

It belongs to the betacoronaviruses spike protein family. In terms of assembly, homotrimer; each monomer consists of a S1 and a S2 subunit. The resulting peplomers protrude from the virus surface as spikes. Specific enzymatic cleavages in vivo yield mature proteins. The precursor is processed into S1 and S2 by host cell furin or another cellular protease to yield the mature S1 and S2 proteins. Additionally, a second cleavage leads to the release of a fusion peptide after viral attachment to host cell receptor. Post-translationally, the cytoplasmic Cys-rich domain is palmitoylated. Spike glycoprotein is digested within host endosomes.

It localises to the virion membrane. It is found in the host endoplasmic reticulum-Golgi intermediate compartment membrane. The protein localises to the host cell membrane. Attaches the virion to the cell membrane by interacting with host receptor, initiating the infection. Its function is as follows. Mediates fusion of the virion and cellular membranes by acting as a class I viral fusion protein. Under the current model, the protein has at least three conformational states: pre-fusion native state, pre-hairpin intermediate state, and post-fusion hairpin state. During viral and target cell membrane fusion, the coiled coil regions (heptad repeats) assume a trimer-of-hairpins structure, positioning the fusion peptide in close proximity to the C-terminal region of the ectodomain. The formation of this structure appears to drive apposition and subsequent fusion of viral and target cell membranes. In terms of biological role, acts as a viral fusion peptide which is unmasked following S2 cleavage occurring upon virus endocytosis. The sequence is that of Spike glycoprotein from Bos taurus (Bovine).